A 449-amino-acid polypeptide reads, in one-letter code: MQLRTGAASVVRTGLGLTQSRCAVQSLTAVPLERRIRQSKAFYHNTKKNDSAWAAAVSVAGNIVNNAVTKAIKGTDGLPTIDPLRLVAGEMKFLTGNIRKLLGSGHPSLDRAAKYYTQAEGKHVRPLIVLLMSRATALCPKAPQRQQSTLQASAAIDTSISPLNILSDFNPSDATPVSIPADTDILPSQRRLAEITELIHTASLLHDDVIDHSESRRGAPSANLEFGNKMAVLAGDFLLGRASVALARLRHAEVVELLATVIANLVEGEFMQLKNTARDEKNPKWSEETLTYYLQKTYLKTASLISKSCRASALLGGADAATVDAAYLYGKNLGLAFQLVDDMLDYTRSEKELGKPAGADLELGLATAPLLFAWKTMPELGPLVGRKFEKEGDAARARELVLQSNGIEQTRALAQDYAEKAIEAISGFPDSEAKDGLIEMAVKTLKRNK.

3 residues coordinate isopentenyl diphosphate: Lys122, Arg125, and His200. Mg(2+) is bound by residues Asp207 and Asp211. Residue Arg216 coordinates an all-trans-polyprenyl diphosphate. Arg217 contacts isopentenyl diphosphate. An all-trans-polyprenyl diphosphate is bound by residues Lys300, Thr301, Gln338, and Lys355.

Belongs to the FPP/GGPP synthase family. It depends on Mg(2+) as a cofactor.

It is found in the mitochondrion. It functions in the pathway cofactor biosynthesis; ubiquinone biosynthesis. Assembly of polyisoprenoid side chains. The polyprenyl synthase of coenzyme Q biosynthesis catalyzes the formation from isopentenyl diphosphate of all trans-polyprenyl pyrophosphates generally ranging in length of between 6 and 10 isoprene units depending on the species. This chain is Probable hexaprenyl pyrophosphate synthase, mitochondrial, found in Neurospora crassa (strain ATCC 24698 / 74-OR23-1A / CBS 708.71 / DSM 1257 / FGSC 987).